The chain runs to 683 residues: DNA-directed RNA polymerase subunit beta' (683 aa).

Residues Cys69, Cys71, Cys87, and Cys90 each contribute to the Zn(2+) site. Mg(2+) is bound by residues Asp489, Asp491, and Asp493.

The protein belongs to the RNA polymerase beta' chain family. RpoC1 subfamily. In terms of assembly, in plastids the minimal PEP RNA polymerase catalytic core is composed of four subunits: alpha, beta, beta', and beta''. When a (nuclear-encoded) sigma factor is associated with the core the holoenzyme is formed, which can initiate transcription. The cofactor is Mg(2+). Zn(2+) serves as cofactor.

It is found in the plastid. The protein resides in the chloroplast. The enzyme catalyses RNA(n) + a ribonucleoside 5'-triphosphate = RNA(n+1) + diphosphate. Functionally, DNA-dependent RNA polymerase catalyzes the transcription of DNA into RNA using the four ribonucleoside triphosphates as substrates. The polypeptide is DNA-directed RNA polymerase subunit beta' (Sorghum bicolor (Sorghum)).